Here is a 429-residue protein sequence, read N- to C-terminus: FAD-dependent monooxygenase azaH (429 aa).

The helical transmembrane segment at serine 5 to leucine 25 threads the bilayer. Residues glutamate 35 and glycine 48 each coordinate FAD. 2 N-linked (GlcNAc...) asparagine glycosylation sites follow: asparagine 75 and asparagine 87. FAD is bound at residue arginine 116. The active site involves arginine 199. Residues aspartate 315 and alanine 328 each contribute to the FAD site.

Belongs to the paxM FAD-dependent monooxygenase family. It depends on FAD as a cofactor.

The protein resides in the membrane. Its pathway is secondary metabolite biosynthesis. In terms of biological role, FAD-dependent monooxygenase; part of the gene cluster that mediates the biosynthesis of azaphilones, a class of fungal metabolites characterized by a highly oxygenated pyrano-quinone bicyclic core and exhibiting a broad range of bioactivities. In the first step, the non-reducing polyketide synthase azaA forms the hexaketide precursor from successive condensations of five malonyl-CoA units, presumably with a simple acetyl-CoA starter unit. The reactive polyketide chain then undergoes a PT-mediated C2-C7 cyclization to afford the aromatic ring and is eventually released as an aldehyde through the R-domain. The putative ketoreductase azaE is proposed to catalyze the reduction of the terminal ketone resulting in the early culture product FK17-P2a. The monooxygenase azaH was demonstrated to be the only enzyme required to convert FK17-P2a to azanigerone E. AzaH first hydroxylates the benzaldehyde intermediate FK17-P2a at C4, which triggers the formation of the pyran-ring to afford azanigerone E. In parallel, the 2,4-dimethylhexanoyl chain is synthesized by the HR-PKS azaB and is proposed to be transferred to the C4-hydroxyl of azanigerone E by the acyltransferase azaD directly from the ACP domain of azaB. Alternatively, the 2,4-dimethyl-hexanoyl chain may be offloaded from the HR-PKS as a carboxylic acid and converted to an acyl-CoA by azaF. The resulting acyl-CoA molecule could then be taken up as a substrate by AzaD to form azanigerone B. To yield the carboxylic acid substituent in azanigerone A, the hydroxypropyl side chain of azanigerone B would need to undergo a C-C oxidative cleavage catalyzed by cytochrome P450 AzaI. AzaI is proposed to act on a vicinal diol that leads to a C-C bond scission either through an alkoxyradical intermediate or a peroxy complex. In the biosynthesis of azanigerone A, azanigerone B first undergoes hydroxylation at C10, possibly catalyzed by one of the two FAD-dependent monooxygenases encoded in the cluster, azaG or azaL, resulting in the vicinal diol azanigerone C. Oxidative cleavage of azanigerone C by azaI would yield the corresponding aldehyde derivative of azanigerone A. Finally, the dehydrogenase azaJ is proposed to convert the aldehyde functional group into the carboxylic acid, completing the conversion from azanigerone B to azanigerone A. Alternatively, the oxidation of aldehyde to carboxylic acid may be catalyzed by the same P450 enzyme azaI via consecutive oxidation or by endogenous alcohol dehydrogenase. The sequence is that of FAD-dependent monooxygenase azaH from Aspergillus niger (strain ATCC 1015 / CBS 113.46 / FGSC A1144 / LSHB Ac4 / NCTC 3858a / NRRL 328 / USDA 3528.7).